The chain runs to 393 residues: 26S proteasome regulatory subunit 10B (393 aa).

178-185 (GPPGTGKT) lines the ATP pocket.

Belongs to the AAA ATPase family.

It is found in the cytoplasm. It localises to the nucleus. In terms of biological role, the 26S proteasome is involved in the ATP-dependent degradation of ubiquitinated proteins. The regulatory (or ATPase) complex confers ATP dependency and substrate specificity to the 26S complex. This chain is 26S proteasome regulatory subunit 10B (psmC6), found in Dictyostelium discoideum (Social amoeba).